The primary structure comprises 4574 residues: E3 ubiquitin-protein ligase MYCBP2 (4574 aa).

Disordered stretches follow at residues 92-115 (RGKKALSKKKLKRRQKVKSKVKTR) and 599-620 (SASKGEDGESTKSRRQPKPYKP). 4 RCC1 repeats span residues 591–646 (DGSV…IVTK), 690–746 (SGEV…MMCQ), 943–993 (NGDV…VLLM), and 995–1051 (GQVF…LRID). Residues 611 to 620 (SRRQPKPYKP) are compositionally biased toward basic residues. A disulfide bridge connects residues Cys1733 and Cys1850. 2 disordered regions span residues 1976–1998 (APPTFNPNQSTDSTTGNQPEQGL) and 2313–2332 (LQRLPGTSSNSATGTDLTFG). 2 stretches are compositionally biased toward polar residues: residues 1981 to 1998 (NPNQSTDSTTGNQPEQGL) and 2317 to 2328 (PGTSSNSATGTD). The stretch at 2336-2417 (APKLEATYEP…IHVTIDGIEI (82 aa)) is one Filamin repeat. Disordered regions lie at residues 2613 to 2824 (GFDY…PSPH), 2845 to 2922 (SNDE…KQAM), 3085 to 3116 (SPGSSAILKKKENEKDSKKTKKEKKKKEKAEV), 3345 to 3365 (PGSNMKSMPPSLETSPITDSD), and 3505 to 3526 (FETEEEEDEENKGNKENLEQEK). Basic and acidic residues-rich tracts occupy residues 2639 to 2663 (HRQESRSSKTDSHSNRSVDQVKSKN) and 2678 to 2688 (DTGKLRSDSHS). Over residues 2716 to 2729 (NPGSRSSSPKQKTF) the composition is skewed to polar residues. Positions 2730 to 2745 (TSGRSSPSSTSSPRSS) are enriched in low complexity. Composition is skewed to basic and acidic residues over residues 2761–2772 (VHLDPPRERSKS), 2854–2864 (SELHNAEEGSS), and 2874–2883 (PVKEELESRS). Basic residues-rich tracts occupy residues 2887-2900 (VSRKTSSRHVRPKK) and 3102-3111 (KKTKKEKKKK). Residues 3515 to 3526 (NKGNKENLEQEK) are compositionally biased toward basic and acidic residues. A DOC domain is found at 3617 to 3795 (FNISVQSGYE…SVAQQKNCEA (179 aa)). A disordered region spans residues 3815-3841 (GDAEPTPEQEEKNLLSSPEGEDKAPSD). Residues Cys4324, Cys4327, Cys4342, His4344, His4347, Cys4350, Cys4371, Cys4374, Cys4440, and Cys4443 each coordinate Zn(2+). The segment at 4324-4375 (CMICFTEALSAAPAIQLDCSHVFHLQCTRRVLENRWLGPRITFGFMSCPICK) adopts an RING-type; atypical zinc-finger fold. Residues 4435–4572 (YAYYVCFKCK…LGCGVCRNAH (138 aa)) are tandem cysteine domain. Residue Cys4454 is part of the active site. Residues Cys4471, Cys4474, Cys4483, His4486, Cys4495, Cys4498, and Cys4499 each coordinate Zn(2+). Cys4506 is a catalytic residue. Zn(2+)-binding residues include Cys4513, Cys4516, Cys4534, Cys4548, His4554, Cys4565, and Cys4568.

Belongs to the RING-Cys relay (RCR) family. As to expression, widely expressed when the visual system begins developing. In the eye, expressed in all cells, including retinal ganglion cells, with no obvious gradient.

It is found in the nucleus. The protein resides in the cell projection. Its subcellular location is the axon. It localises to the cytoplasm. The protein localises to the cytoskeleton. The catalysed reaction is [E2 ubiquitin-conjugating enzyme]-S-ubiquitinyl-L-cysteine + [acceptor protein]-L-threonine = [E2 ubiquitin-conjugating enzyme]-L-cysteine + [acceptor protein]-3-O-ubiquitinyl-L-threonine.. It participates in protein modification; protein ubiquitination. In terms of biological role, atypical E3 ubiquitin-protein ligase which specifically mediates ubiquitination of threonine and serine residues on target proteins, instead of ubiquitinating lysine residues. Shows esterification activity towards both threonine and serine, with a preference for threonine, and acts via two essential catalytic cysteine residues that relay ubiquitin to its substrate via thioester intermediates. Interacts with the E2 enzymes UBE2D1, UBE2D3, UBE2E1 and UBE2L3. Plays a key role in neural development, probably by mediating ubiquitination of threonine residues on target proteins. Involved in different processes such as regulation of neurite outgrowth, synaptic growth, synaptogenesis and axon degeneration. Required in the visual system for correct fasciculation, targeting and mapping of retinal axons. Acts as a regulator of pteridine synthesis. May play a role in the regulation of the circadian clock gene expression. In Danio rerio (Zebrafish), this protein is E3 ubiquitin-protein ligase MYCBP2.